The primary structure comprises 174 residues: Beta-lactoglobulin (174 aa).

Residues 1–18 (MKFLLLTVGLALIGAIQA) form the signal peptide. Intrachain disulfides connect Cys79-Cys172 and Cys122-Cys134.

The protein belongs to the calycin superfamily. Lipocalin family. Monomer.

It localises to the secreted. Its function is as follows. Lactoglobulin is the primary component of whey, it binds retinol and is probably involved in the transport of that molecule. In Notamacropus eugenii (Tammar wallaby), this protein is Beta-lactoglobulin (LGB).